The chain runs to 385 residues: Protein-glutamate methylesterase/protein-glutamine glutaminase (385 aa).

The 119-residue stretch at 20–138 (RVMIVDDSVV…EASAADIFKH (119 aa)) folds into the Response regulatory domain. At D71 the chain carries 4-aspartylphosphate. Residues 189–383 (GVTAPRVLLI…PKLVRLFSGD (195 aa)) enclose the CheB-type methylesterase domain. Active-site residues include S201, H229, and D325.

This sequence belongs to the CheB family. Phosphorylated by CheA. Phosphorylation of the N-terminal regulatory domain activates the methylesterase activity.

Its subcellular location is the cytoplasm. The enzyme catalyses [protein]-L-glutamate 5-O-methyl ester + H2O = L-glutamyl-[protein] + methanol + H(+). The catalysed reaction is L-glutaminyl-[protein] + H2O = L-glutamyl-[protein] + NH4(+). In terms of biological role, involved in chemotaxis. Part of a chemotaxis signal transduction system that modulates chemotaxis in response to various stimuli. Catalyzes the demethylation of specific methylglutamate residues introduced into the chemoreceptors (methyl-accepting chemotaxis proteins or MCP) by CheR. Also mediates the irreversible deamidation of specific glutamine residues to glutamic acid. In Rhodopseudomonas palustris (strain BisB5), this protein is Protein-glutamate methylesterase/protein-glutamine glutaminase.